The chain runs to 368 residues: RING finger protein 32 (368 aa).

A disordered region spans residues 45–82 (RKKEKKSKSLKRDATAIIDTGLRKSTEGPNMEDPEKEY). The RING-type 1; atypical zinc-finger motif lies at 129–171 (CPICKEEFELHPQVLLSCSHVFHRACLQAFEKFTNKKTCPLCR). Residues 188-217 (RVKCATRIQAYWRGYIVRKWYRNLRKIIPP) enclose the IQ domain. The segment at 295-358 (CSICLTPLSF…APFHVCPLCR (64 aa)) adopts an RING-type 2; atypical zinc-finger fold.

It is found in the cytoplasm. In terms of biological role, may play a role in sperm formation. The sequence is that of RING finger protein 32 (Rnf32) from Mus musculus (Mouse).